A 197-amino-acid chain; its full sequence is Small ribosomal subunit protein uS4c (197 aa).

The 77-residue stretch at 85–161 (MRLDNILFRL…TGKELANHLN (77 aa)) folds into the S4 RNA-binding domain.

The protein belongs to the universal ribosomal protein uS4 family. Part of the 30S ribosomal subunit. Contacts protein S5. The interaction surface between S4 and S5 is involved in control of translational fidelity.

It is found in the plastid. One of the primary rRNA binding proteins, it binds directly to 16S rRNA where it nucleates assembly of the body of the 30S subunit. In terms of biological role, with S5 and S12 plays an important role in translational accuracy. The polypeptide is Small ribosomal subunit protein uS4c (rps4) (Cuscuta sandwichiana (Kauna'oa)).